The chain runs to 521 residues: Protein DML1 (521 aa).

The protein belongs to the misato family.

It localises to the mitochondrion. Its function is as follows. Involved in the partitioning of the mitochondrial organelle and mitochondrial DNA (mtDNA) inheritance. The chain is Protein DML1 (DML1) from Phaeosphaeria nodorum (strain SN15 / ATCC MYA-4574 / FGSC 10173) (Glume blotch fungus).